The chain runs to 263 residues: uncharacterized protein (263 aa).

16 to 23 (AKGGTGKT) serves as a coordination point for ATP.

It to M.jannaschii MJ0547 and MJ0169.

This is an uncharacterized protein from Methanocaldococcus jannaschii (strain ATCC 43067 / DSM 2661 / JAL-1 / JCM 10045 / NBRC 100440) (Methanococcus jannaschii).